A 180-amino-acid chain; its full sequence is Probable galaptin lec-8 (180 aa).

Residues 11-138 (SAHAIREQLR…AAHIDEISFS (128 aa)) form the Galectin domain.

The protein is Probable galaptin lec-8 (lec-8) of Caenorhabditis elegans.